The following is a 256-amino-acid chain: Small ribosomal subunit protein eS1A (256 aa).

An N-acetylalanine; partial modification is found at A2.

This sequence belongs to the eukaryotic ribosomal protein eS1 family. Component of the small ribosomal subunit. Mature ribosomes consist of a small (40S) and a large (60S) subunit. The 40S subunit contains about 33 different proteins and 1 molecule of RNA (18S). The 60S subunit contains about 49 different proteins and 3 molecules of RNA (25S, 5.8S and 5S).

The protein resides in the cytoplasm. The chain is Small ribosomal subunit protein eS1A from Scheffersomyces stipitis (strain ATCC 58785 / CBS 6054 / NBRC 10063 / NRRL Y-11545) (Yeast).